Consider the following 607-residue polypeptide: UvrABC system protein C (607 aa).

The region spanning 15–93 (SEPGVYCMLD…IKKYQPRYNI (79 aa)) is the GIY-YIG domain. Positions 202–237 (HEVIADLIKKMEAASQQLNFELAAKVRDQIMLLRKM) constitute a UVR domain.

It belongs to the UvrC family. Interacts with UvrB in an incision complex.

The protein localises to the cytoplasm. Its function is as follows. The UvrABC repair system catalyzes the recognition and processing of DNA lesions. UvrC both incises the 5' and 3' sides of the lesion. The N-terminal half is responsible for the 3' incision and the C-terminal half is responsible for the 5' incision. The polypeptide is UvrABC system protein C (Pseudoalteromonas translucida (strain TAC 125)).